The primary structure comprises 192 residues: Glutaredoxin-C9 (192 aa).

The 103-residue stretch at 89-191 (YERVARMASG…PLLKQAGALW (103 aa)) folds into the Glutaredoxin domain. The cysteines at positions 109 and 112 are disulfide-linked. The Responsive for interaction with TGA factors motif lies at 189-192 (ALWL).

The protein belongs to the glutaredoxin family. CC-type subfamily.

It is found in the cytoplasm. The protein resides in the nucleus. Has a glutathione-disulfide oxidoreductase activity in the presence of NADPH and glutathione reductase. Reduces low molecular weight disulfides and proteins. This is Glutaredoxin-C9 (GRXC9) from Oryza sativa subsp. japonica (Rice).